The chain runs to 262 residues: Thioredoxin-like protein HCF164, chloroplastic (262 aa).

The transit peptide at 1 to 54 (MAVVASRCTGLLLPDLGASLAGFRRRRSTPASSLSFRPRRARRRLGSLSCIAPP) directs the protein to the chloroplast. A disordered region spans residues 47–90 (SLSCIAPPDSAEPQTDEPAAKDDSTEDKAEASSASQDAGNPTFP). Residues 64 to 76 (PAAKDDSTEDKAE) show a composition bias toward basic and acidic residues. Residues 78-89 (SSASQDAGNPTF) show a composition bias toward polar residues. Residues 78 to 230 (SSASQDAGNP…FLDNVVALAS (153 aa)) form the Thioredoxin domain. Residues C151 and C154 each act as nucleophile in the active site. Cysteines 151 and 154 form a disulfide.

It belongs to the thioredoxin family.

The protein resides in the plastid. The protein localises to the chloroplast. Probable thiol-disulfide oxidoreductase that may participate in various redox reactions in the chloroplast. The polypeptide is Thioredoxin-like protein HCF164, chloroplastic (Oryza sativa subsp. japonica (Rice)).